The chain runs to 141 residues: MNAKTVLGFDFGTKSIGVAVGQQITASATPLLSIKAVDGIPNWEEIAKLIQEWQPDLVVVGLPLNMDGTEQEMTHRARKFANRLNAKFGVKIFTQDERLTTTDAKARLFELGGYKALTKGQVDAVSAVLIIESYFENHFGD.

The protein belongs to the YqgF nuclease family.

The protein localises to the cytoplasm. Could be a nuclease involved in processing of the 5'-end of pre-16S rRNA. In Shewanella oneidensis (strain ATCC 700550 / JCM 31522 / CIP 106686 / LMG 19005 / NCIMB 14063 / MR-1), this protein is Putative pre-16S rRNA nuclease.